The following is a 443-amino-acid chain: Mevalonate kinase (443 aa).

ATP is bound by residues lysine 12, serine 138, and 143 to 149; that span reads GAGLGSS. Mg(2+) is bound by residues serine 149 and glutamate 191. Aspartate 202 serves as the catalytic Proton acceptor.

This sequence belongs to the GHMP kinase family. Mevalonate kinase subfamily. In terms of assembly, homodimer. Requires Mg(2+) as cofactor.

The protein localises to the cytoplasm. It is found in the cytosol. It catalyses the reaction (R)-mevalonate + ATP = (R)-5-phosphomevalonate + ADP + H(+). The protein operates within isoprenoid biosynthesis; isopentenyl diphosphate biosynthesis via mevalonate pathway; isopentenyl diphosphate from (R)-mevalonate: step 1/3. Farnesyl pyrophosphate and geranyl pyrophosphate inhibit mevalonate kinase by binding competitively at the ATP-binding site. In terms of biological role, mevalonate kinase; part of the second module of ergosterol biosynthesis pathway that includes the middle steps of the pathway. ERG12 converts mevalonate into 5-phosphomevalonate. The second module is carried out in the vacuole and involves the formation of farnesyl diphosphate, which is also an important intermediate in the biosynthesis of ubiquinone, dolichol, heme and prenylated proteins. Activity by the mevalonate kinase ERG12 first converts mevalonate into 5-phosphomevalonate. 5-phosphomevalonate is then further converted to 5-diphosphomevalonate by the phosphomevalonate kinase ERG8. The diphosphomevalonate decarboxylase MVD1/ERG19 then produces isopentenyl diphosphate. The isopentenyl-diphosphate delta-isomerase IDI1 then catalyzes the 1,3-allylic rearrangement of the homoallylic substrate isopentenyl (IPP) to its highly electrophilic allylic isomer, dimethylallyl diphosphate (DMAPP). Finally the farnesyl diphosphate synthase ERG20 catalyzes the sequential condensation of isopentenyl pyrophosphate with dimethylallyl pyrophosphate, and then with the resultant geranylpyrophosphate to the ultimate product farnesyl pyrophosphate. This chain is Mevalonate kinase, found in Saccharomyces cerevisiae (strain ATCC 204508 / S288c) (Baker's yeast).